The primary structure comprises 567 residues: DNA ligase B (567 aa).

Lys132 functions as the N6-AMP-lysine intermediate in the catalytic mechanism.

It belongs to the NAD-dependent DNA ligase family. LigB subfamily.

The catalysed reaction is NAD(+) + (deoxyribonucleotide)n-3'-hydroxyl + 5'-phospho-(deoxyribonucleotide)m = (deoxyribonucleotide)n+m + AMP + beta-nicotinamide D-nucleotide.. In terms of biological role, catalyzes the formation of phosphodiester linkages between 5'-phosphoryl and 3'-hydroxyl groups in double-stranded DNA using NAD as a coenzyme and as the energy source for the reaction. This Yersinia pseudotuberculosis serotype IB (strain PB1/+) protein is DNA ligase B.